An 852-amino-acid chain; its full sequence is Disease resistance RPP13-like protein 4 (852 aa).

The stretch at 17–68 forms a coiled coil; that stretch reads LEEKGRTVSDYRKQLEDLQSELKYMQSFLKDAERQKRTNETLRTLVADLREL. ADP is bound by residues Arg149, Val161, 189–196, Arg297, and Lys363; that span reads GMGGLGKT. The NB-ARC domain maps to 164–410; the sequence is EGDKRKIKEW…MSSLQLSYDE (247 aa). LRR repeat units follow at residues 558–581, 585–609, 633–657, 683–706, 763–786, and 798–824; these read CKYL…ILDE, LQHL…MEDL, FKKL…IGSL, LTNL…ELDS, LPML…FWGN, and LSSL…VTAN.

It belongs to the disease resistance NB-LRR family. RPP13 subfamily. As to quaternary structure, interacts with ZED1/ZRK5. Component of a stable high-order oligomeric complex made of RKS1 and RPP13L4/ZAR1 which recruits ZED1-related kinases (e.g. uridylylated PBL2 and acetylated ZED1/ZRK5) in the presence of ATP and pathogenic bacteria type III secreted effector (T3SE) proteins (e.g. Pseudomonas syringae HopZ1a and HopF2a and Xanthomonas campestris pv. campestris (Xcc) XopAC/AvrAC) to form a wheel-like pentameric resistosome; this complex triggers immunity toward pathogenic bacteria (e.g. X.campestris and P.syringae), especially in vascular tissues. Interacts with RKS1, ZED1/ZRK5, ZRK3, ZRK6 and ZRK15.

It localises to the cell membrane. Its subcellular location is the nucleus. Exhibits autoinhibition activity. CC-NB-LRR receptor-like protein required for recognition of pathogenic bacteria type III effectors (T3E) such as Pseudomonas syringae HopZ1a and HopF2a and Xanthomonas campestris pv. campestris (Xcc) XopAC/AvrAC; this recognition requires ZED1-related kinases (e.g. PBL2, ZRK3 and ZED1/ZRK5). Confers allele-specific recognition and virulence attenuation of HopZ1a. Immunity mediated by RPP13L4/ZAR1 is independent of several genes required by other resistance protein signaling pathways such as NDR1 and RAR1. Together with ZED1/ZRK5, involved in the regulation of the ambient temperature-sensitive intersection of growth and immune response in the absence of pathogens. The chain is Disease resistance RPP13-like protein 4 (RPP13L4) from Arabidopsis thaliana (Mouse-ear cress).